The chain runs to 28 residues: Ranatuerin-2SEb (28 aa).

Cysteines 23 and 28 form a disulfide.

Expressed by the skin glands.

The protein resides in the secreted. In terms of biological role, mast cell degranulating peptide. Causes histamine release from rat peritoneal mast cells in vitro. Has antibacterial activity against the Gram-negative bacterium E.coli K12 and Gram-positive bacterium M.luteus NCT C2665. The protein is Ranatuerin-2SEb of Lithobates sevosus (Dusky gopher frog).